A 668-amino-acid polypeptide reads, in one-letter code: Protein IQ-DOMAIN 14 (668 aa).

The tract at residues 1–11 (MVKKGSWFSAI) is calmodulin-binding. 2 disordered regions span residues 16-54 (TPHS…FLPI) and 66-305 (GEAE…PRAV). The span at 18–31 (HSKEKLANEPERKS) shows a compositional bias: basic and acidic residues. Positions 32 to 43 (GKEKKKKGFGKL) are enriched in basic residues. Pro residues predominate over residues 78 to 96 (PPTPDRPNPYSASPPPRPA). 2 stretches are compositionally biased toward low complexity: residues 97-120 (SPRV…SPRA) and 166-175 (PSSASANAPP). Residues 269–279 (PTTPKPPSPRS) show a composition bias toward pro residues. IQ domains lie at 321–350 (QHAS…LVRL) and 343–372 (ALKG…YMQQ). 2 disordered regions span residues 399–431 (AKWA…KTDA) and 476–561 (SPAP…SLTS). The segment covering 415–431 (VLTKEERDSRSQRKTDA) has biased composition (basic and acidic residues). The span at 516–529 (DTSTPRSSRSTFHT) shows a compositional bias: polar residues.

This sequence belongs to the IQD family. In terms of assembly, binds to multiple calmodulin (CaM) in the presence of Ca(2+) and CaM-like proteins. Expressed in hypocotyls, cotyledons, leaves and petioles.

It localises to the cell membrane. Its subcellular location is the cytoplasm. It is found in the cytoskeleton. Its function is as follows. May be involved in cooperative interactions with calmodulins or calmodulin-like proteins. Recruits calmodulin proteins to microtubules, thus being a potential scaffold in cellular signaling and trafficking. Regulates cell and organ shapes (prevents twisting) in aerial parts probably by regulating transverse microtubules (MT) arrays alignment. Regulates the formation of oval xylem secondary cell-wall deposition pits through microtubule-dependent lateral inhibition of Rho GTPase domains, thus confining the area of active ROP domains within the lattice of the cortical microtubules. May associate with nucleic acids and regulate gene expression at the transcriptional or post-transcriptional level. The chain is Protein IQ-DOMAIN 14 from Arabidopsis thaliana (Mouse-ear cress).